A 201-amino-acid chain; its full sequence is NAD(P)H quinone oxidoreductase PST2 (201 aa).

The region spanning 6–192 is the Flavodoxin-like domain; that stretch reads VAIIIYSLYH…SIAQQQGEDF (187 aa). Residues 12 to 16 and 112 to 164 contribute to the FMN site; these read SLYHH and VFVS…SPWG.

It belongs to the WrbA family. FMN serves as cofactor.

It is found in the cell membrane. The catalysed reaction is a quinone + NADH + H(+) = a quinol + NAD(+). The enzyme catalyses a quinone + NADPH + H(+) = a quinol + NADP(+). Its function is as follows. Flavodoxin-like protein (FLP) that plays a role in cell wall integrity, oxidative stress protection and virulence. FLPs act as NAD(P)H quinone oxidoreductases. Reduces ubiquinone (coenzyme Q), enabling it to serve as an antioxidant in the membrane. This Candida albicans (strain SC5314 / ATCC MYA-2876) (Yeast) protein is NAD(P)H quinone oxidoreductase PST2.